A 443-amino-acid chain; its full sequence is D-inositol 3-phosphate glycosyltransferase (443 aa).

1D-myo-inositol 3-phosphate is bound at residue His30. UDP-N-acetyl-alpha-D-glucosamine is bound by residues 36–37 and Gly44; that span reads QP. Residues 41 to 46, Lys99, Tyr132, Thr156, and Arg176 each bind 1D-myo-inositol 3-phosphate; that span reads DAGGMN. Arg250, Lys255, and Arg316 together coordinate UDP-N-acetyl-alpha-D-glucosamine. Mg(2+)-binding residues include Phe325, Arg326, and Cys328. Glu338 and Glu346 together coordinate UDP-N-acetyl-alpha-D-glucosamine. Thr352 is a binding site for Mg(2+).

Belongs to the glycosyltransferase group 1 family. MshA subfamily. In terms of assembly, homodimer.

The enzyme catalyses 1D-myo-inositol 3-phosphate + UDP-N-acetyl-alpha-D-glucosamine = 1D-myo-inositol 2-acetamido-2-deoxy-alpha-D-glucopyranoside 3-phosphate + UDP + H(+). In terms of biological role, catalyzes the transfer of a N-acetyl-glucosamine moiety to 1D-myo-inositol 3-phosphate to produce 1D-myo-inositol 2-acetamido-2-deoxy-glucopyranoside 3-phosphate in the mycothiol biosynthesis pathway. The protein is D-inositol 3-phosphate glycosyltransferase of Stackebrandtia nassauensis (strain DSM 44728 / CIP 108903 / NRRL B-16338 / NBRC 102104 / LLR-40K-21).